Reading from the N-terminus, the 146-residue chain is Large ribosomal subunit protein uL15 (146 aa).

A compositionally biased stretch (basic and acidic residues) spans 1–13 (MKLHELHSAEGSR). The tract at residues 1-55 (MKLHELHSAEGSRRNRKRVGRGTSSGYGKTSGRGQKGQLARQGGHTRLGFEGGQM) is disordered. Positions 23–35 (TSSGYGKTSGRGQ) are enriched in gly residues.

Belongs to the universal ribosomal protein uL15 family. In terms of assembly, part of the 50S ribosomal subunit.

Its function is as follows. Binds to the 23S rRNA. In Lactobacillus acidophilus (strain ATCC 700396 / NCK56 / N2 / NCFM), this protein is Large ribosomal subunit protein uL15.